A 617-amino-acid polypeptide reads, in one-letter code: Dihydroxy-acid dehydratase (617 aa).

Residue aspartate 81 participates in Mg(2+) binding. Cysteine 122 is a binding site for [2Fe-2S] cluster. Mg(2+) contacts are provided by aspartate 123 and lysine 124. Lysine 124 carries the post-translational modification N6-carboxylysine. Cysteine 195 lines the [2Fe-2S] cluster pocket. Position 492 (glutamate 492) interacts with Mg(2+). The active-site Proton acceptor is the serine 518.

This sequence belongs to the IlvD/Edd family. In terms of assembly, homodimer. [2Fe-2S] cluster serves as cofactor. Requires Mg(2+) as cofactor.

The enzyme catalyses (2R)-2,3-dihydroxy-3-methylbutanoate = 3-methyl-2-oxobutanoate + H2O. It catalyses the reaction (2R,3R)-2,3-dihydroxy-3-methylpentanoate = (S)-3-methyl-2-oxopentanoate + H2O. Its pathway is amino-acid biosynthesis; L-isoleucine biosynthesis; L-isoleucine from 2-oxobutanoate: step 3/4. It participates in amino-acid biosynthesis; L-valine biosynthesis; L-valine from pyruvate: step 3/4. Its function is as follows. Functions in the biosynthesis of branched-chain amino acids. Catalyzes the dehydration of (2R,3R)-2,3-dihydroxy-3-methylpentanoate (2,3-dihydroxy-3-methylvalerate) into 2-oxo-3-methylpentanoate (2-oxo-3-methylvalerate) and of (2R)-2,3-dihydroxy-3-methylbutanoate (2,3-dihydroxyisovalerate) into 2-oxo-3-methylbutanoate (2-oxoisovalerate), the penultimate precursor to L-isoleucine and L-valine, respectively. The protein is Dihydroxy-acid dehydratase of Xanthobacter autotrophicus (strain ATCC BAA-1158 / Py2).